Reading from the N-terminus, the 194-residue chain is MKRERLMSINKEKAEAAIYQFLEAIGENPNREGLLDTPKRVAKMYAEMFAGLKKDPKEEFTAVFTEHHEDVVIVKDISFYSMCEHHQVPFYGKAHIAYLPSDGRVTGLSKLARAVEVASKRPQLQERLTAQIADALVEALHPTGVLVLVEAEHMCMTMRGIKKPGSKTITTTARGLYKEDRSERQEVMALMTKV.

The Zn(2+) site is built by Cys83, His86, and Cys155.

It belongs to the GTP cyclohydrolase I family. Toroid-shaped homodecamer, composed of two pentamers of five dimers.

It catalyses the reaction GTP + H2O = 7,8-dihydroneopterin 3'-triphosphate + formate + H(+). It functions in the pathway cofactor biosynthesis; 7,8-dihydroneopterin triphosphate biosynthesis; 7,8-dihydroneopterin triphosphate from GTP: step 1/1. The chain is GTP cyclohydrolase 1 (folE) from Streptococcus pyogenes.